A 371-amino-acid chain; its full sequence is Putative RNA-binding protein Luc7-like 1 (371 aa).

Coiled coils occupy residues Met-87–Met-177 and Gln-220–Leu-256. Basic and acidic residues predominate over residues Val-232–Gly-257. The segment at Val-232–Ile-371 is disordered. Residues Arg-258–Ser-317 are compositionally biased toward basic residues. Basic and acidic residues-rich tracts occupy residues Arg-318–Leu-351 and Arg-361–Ile-371. Phosphoserine is present on residues Ser-336 and Ser-363.

Belongs to the Luc7 family.

In terms of biological role, may bind to RNA via its Arg/Ser-rich domain. The protein is Putative RNA-binding protein Luc7-like 1 (Luc7l) of Mus musculus (Mouse).